The sequence spans 230 residues: UPF0173 metal-dependent hydrolase MK1542 (230 aa).

The protein belongs to the UPF0173 family.

The polypeptide is UPF0173 metal-dependent hydrolase MK1542 (Methanopyrus kandleri (strain AV19 / DSM 6324 / JCM 9639 / NBRC 100938)).